The chain runs to 156 residues: Small ribosomal subunit protein uS7 (156 aa).

Belongs to the universal ribosomal protein uS7 family. As to quaternary structure, part of the 30S ribosomal subunit. Contacts proteins S9 and S11.

Its function is as follows. One of the primary rRNA binding proteins, it binds directly to 16S rRNA where it nucleates assembly of the head domain of the 30S subunit. Is located at the subunit interface close to the decoding center, probably blocks exit of the E-site tRNA. The chain is Small ribosomal subunit protein uS7 from Prochlorococcus marinus (strain MIT 9312).